We begin with the raw amino-acid sequence, 391 residues long: GTPase Obg (391 aa).

The region spanning Met1–Leu159 is the Obg domain. Positions Ala160–Lys333 constitute an OBG-type G domain. GTP is bound by residues Gly166 to Ser173, Phe191 to Val195, Asp213 to Gly216, Asn283 to Asp286, and Ser314 to Ile316. Mg(2+)-binding residues include Ser173 and Thr193.

It belongs to the TRAFAC class OBG-HflX-like GTPase superfamily. OBG GTPase family. As to quaternary structure, monomer. Mg(2+) serves as cofactor.

Its subcellular location is the cytoplasm. In terms of biological role, an essential GTPase which binds GTP, GDP and possibly (p)ppGpp with moderate affinity, with high nucleotide exchange rates and a fairly low GTP hydrolysis rate. Plays a role in control of the cell cycle, stress response, ribosome biogenesis and in those bacteria that undergo differentiation, in morphogenesis control. The protein is GTPase Obg of Photorhabdus laumondii subsp. laumondii (strain DSM 15139 / CIP 105565 / TT01) (Photorhabdus luminescens subsp. laumondii).